We begin with the raw amino-acid sequence, 270 residues long: Myeloid leukemia factor 1 (270 aa).

Phosphoserine occurs at positions 6, 8, 32, and 34. Positions 50-125 (RARNRMGHED…VGDEPPKVFQ (76 aa)) are interaction with COPS3. 2 disordered regions span residues 127-148 (STQT…RDSD) and 221-247 (RSVA…AIEH). The span at 138-148 (KETRKALRDSD) shows a compositional bias: basic and acidic residues.

This sequence belongs to the MLF family. Interacts with CENPU. Also interacts with NRBP1/MADM, YWHAZ/14-3-3-zeta and HNRPUL2/MANP. NRBP1 recruits a serine kinase which phosphorylates both itself and MLF1. Phosphorylated MLF1 then binds to YWHAZ and is retained in the cytoplasm. Retained in the nucleus by binding to HNRPUL2. Binds to COPS3/CSN3 which is required for suppression of COP1 and activation of p53. Phosphorylation is required for binding to YWHAZ.

It is found in the cytoplasm. Its subcellular location is the nucleus. The protein resides in the cell projection. The protein localises to the cilium. It localises to the cytoskeleton. It is found in the cilium basal body. In terms of biological role, involved in lineage commitment of primary hemopoietic progenitors by restricting erythroid formation and enhancing myeloid formation. Interferes with erythropoietin-induced erythroid terminal differentiation by preventing cells from exiting the cell cycle through suppression of CDKN1B/p27Kip1 levels. Suppresses COP1 activity via CSN3 which activates p53 and induces cell cycle arrest. Binds DNA and affects the expression of a number of genes so may function as a transcription factor in the nucleus. In Bos taurus (Bovine), this protein is Myeloid leukemia factor 1 (MLF1).